Reading from the N-terminus, the 404-residue chain is MELLEEDLTCPICCCLFEDPRVLPCSHSFCKKCLEGILDGNRSPTWRPPFKCPTCRKETVHNGIASLQVNYSLRGIVEKYNRIRVMPRMSQCRVHSGQPLNIFCATDLKLICGFCATTGDHKGHKFCALEEAYEREKLAFEELFRVVEGWKGAEVHSCLESLESAKKKALERVSRDADRVSEYFDKLLRTLEHKRSEILSDLETLKLAVMQTFDPEINRLRSALEEQRRALNIAESFRSLSDPLTFLQQMQDFREKLRVIQGTPLPSRTDMDVSLSALQSFDVKEWDRVRLGQVDKLCAPYESSAYLSSLPPAAAPRFTRVMWRVVLVVCACLPALNFLPSDCLALSFQDKVVALGGFSLPSPGEIVRWLGFCWKEAASICTLLTELCRNCMLDLINTTSDFIS.

The segment at 10 to 56 adopts an RING-type zinc-finger fold; sequence CPICCCLFEDPRVLPCSHSFCKKCLEGILDGNRSPTWRPPFKCPTCR. A B box-type zinc finger spans residues 87–129; it reads PRMSQCRVHSGQPLNIFCATDLKLICGFCATTGDHKGHKFCAL. Residues Cys92, His95, Cys115, and His121 each coordinate Zn(2+). The helical transmembrane segment at 102-119 threads the bilayer; sequence IFCATDLKLICGFCATTG. Residues 186–236 are a coiled coil; that stretch reads KLLRTLEHKRSEILSDLETLKLAVMQTFDPEINRLRSALEEQRRALNIAES.

It localises to the endoplasmic reticulum membrane. The protein operates within protein modification; protein ubiquitination. Functionally, E3 ubiquitin ligase involved in the retrotranslocation and turnover of membrane and secretory proteins from the ER through a set of processes named ER-associated degradation (ERAD). This process acts on misfolded proteins as well as in the regulated degradation of correctly folded proteins. This chain is Tripartite motif-containing 13 (trim13), found in Danio rerio (Zebrafish).